Here is a 351-residue protein sequence, read N- to C-terminus: tRNA-splicing endonuclease (351 aa).

Catalysis depends on residues tyrosine 287, histidine 298, and lysine 329.

It belongs to the tRNA-intron endonuclease family. Archaeal long subfamily. Homodimer.

The catalysed reaction is pretRNA = a 3'-half-tRNA molecule with a 5'-OH end + a 5'-half-tRNA molecule with a 2',3'-cyclic phosphate end + an intron with a 2',3'-cyclic phosphate and a 5'-hydroxyl terminus.. Functionally, endonuclease that removes tRNA introns. Cleaves pre-tRNA at the 5'- and 3'-splice sites to release the intron. The products are an intron and two tRNA half-molecules bearing 2',3' cyclic phosphate and 5'-OH termini. Recognizes a pseudosymmetric substrate in which 2 bulged loops of 3 bases are separated by a stem of 4 bp. This is tRNA-splicing endonuclease from Methanococcoides burtonii (strain DSM 6242 / NBRC 107633 / OCM 468 / ACE-M).